Reading from the N-terminus, the 172-residue chain is Protein-export protein SecB (172 aa).

It belongs to the SecB family. As to quaternary structure, homotetramer, a dimer of dimers. One homotetramer interacts with 1 SecA dimer.

It localises to the cytoplasm. Functionally, one of the proteins required for the normal export of preproteins out of the cell cytoplasm. It is a molecular chaperone that binds to a subset of precursor proteins, maintaining them in a translocation-competent state. It also specifically binds to its receptor SecA. The sequence is that of Protein-export protein SecB from Cupriavidus pinatubonensis (strain JMP 134 / LMG 1197) (Cupriavidus necator (strain JMP 134)).